The primary structure comprises 127 residues: MPLFGSIFSPKKTPPRKSASLSNLHSLDRSTRELELGLDYGTPTMNLAGQSLKFENGQWVADSVISGGVDRRETQRLRKRNQQLEEENNLLRLKVDILLDMLSETTAESHLKDKELDELKVTNRRRK.

A disordered region spans residues 1–25; sequence MPLFGSIFSPKKTPPRKSASLSNLH. Phosphoserine is present on residues Ser-9 and Ser-20. Residues 60 to 112 are minimal region for the interaction with PKD2; the sequence is VADSVISGGVDRRETQRLRKRNQQLEEENNLLRLKVDILLDMLSETTAESHLK. A coiled-coil region spans residues 68 to 110; it reads GVDRRETQRLRKRNQQLEEENNLLRLKVDILLDMLSETTAESH. The leucine-zipper; mediates homodimerization stretch occupies residues 77 to 98; it reads LRKRNQQLEEENNLLRLKVDIL.

This sequence belongs to the chibby family. As to quaternary structure, homodimer. Homodimerization is essential for nuclear localization and interaction with KPNA4 but is dispensable for interaction with CTNNB1. Interacts with polycystin-2/PKD2 and GM130. Interacts with the C-terminal region of CTNNB1. Interacts (C-terminus) with TCIM (C-terminus), TCIM competes with CTNNB1 for the interaction with CBY1. Interacts with FAM92A; this interaction facilitates targeting of FAM92A to cilium basal body. Interacts with CIBAR2. Interacts with KPNA4. In terms of tissue distribution, found in heart, brain, lung, liver, muscle, kidney and testis. Levels are approximately 3-fold higher in embryonic and adult heart than in lung or liver.

The protein localises to the nucleus speckle. The protein resides in the cytoplasm. It is found in the cytoskeleton. Its subcellular location is the cilium basal body. It localises to the microtubule organizing center. The protein localises to the centrosome. The protein resides in the centriole. It is found in the golgi apparatus. Its subcellular location is the trans-Golgi network. It localises to the cell projection. The protein localises to the cilium. The protein resides in the flagellum. It is found in the nucleus. Its function is as follows. Inhibits the Wnt/Wingless pathway by binding to CTNNB1/beta-catenin and inhibiting beta-catenin-mediated transcriptional activation through competition with TCF/LEF transcription factors. Has also been shown to play a role in regulating the intracellular trafficking of polycystin-2/PKD2 and possibly of other intracellular proteins. Promotes adipocyte and cardiomyocyte differentiation. The protein is Protein chibby homolog 1 (Cby1) of Mus musculus (Mouse).